The primary structure comprises 590 residues: MNIFAAFEERIGEALASLTRAGQLPEGLDLGRVVVEPPRDPSHGDLATNAALVLAKEARTNPKALAERLAAELRSDPRVTEASVAGPGFLNLRLAPQVYGDVVRAALRAGEAFGRGAKQPGLVNVEYVSANPTGPMHVGHGRGAVFGDALANLLVAAGREVVREYYINDAGAQVDVLARSAFLRYREALGEEIGTIPEGLYPGDYLKPVGAMLAKTHGRSLLGKPEAEWLPLVREAAIGAMMERIREDLAALGIRHDVFFSERTLQEGGKEGGEGGAVARLIEALRARDLVYVGRLPPPKGQLPEDWEDRDQTLFRSTAFGDDIDRPLLKSDGSYTYFASDIAYHASKVERGATELIDVLGADHGGYVKRMQAAVRAVSDGRASLDVKLCQLVRLLRGGEPVKMSKRAGEFVTLREVIDEVGRDPVRFMMLYRKNDATLDFDLAKVVEQSKDNPVFYVQYAHARTASVFRQAREAFPGEDLSAEALAGADLSLLTDSGEAEIMRLIAQYPRVVESAGSAHEPHRLAFYLYELASAFHSFWNKGKDLPQLRFVNQTDRMSTLSRLALVAALRGVLASGLGILGVTAPDEMR.

The 'HIGH' region signature appears at 130 to 140; that stretch reads ANPTGPMHVGH.

Belongs to the class-I aminoacyl-tRNA synthetase family. In terms of assembly, monomer.

The protein resides in the cytoplasm. The enzyme catalyses tRNA(Arg) + L-arginine + ATP = L-arginyl-tRNA(Arg) + AMP + diphosphate. The protein is Arginine--tRNA ligase of Methylobacterium nodulans (strain LMG 21967 / CNCM I-2342 / ORS 2060).